The following is a 120-amino-acid chain: Myohemerythrin (120 aa).

Fe cation is bound by residues H26, H56, E60, H75, H79, H108, and D113.

It belongs to the hemerythrin family. Monomer.

The protein localises to the cytoplasm. Functionally, myohemerythrin is an oxygen-binding protein found in the retractor muscles of certain worms. The oxygen-binding site contains two iron atoms. The chain is Myohemerythrin from Theromyzon tessulatum (Duck leech).